We begin with the raw amino-acid sequence, 176 residues long: NAD(P)H-quinone oxidoreductase subunit 6, chloroplastic (176 aa).

The next 5 membrane-spanning stretches (helical) occupy residues 10–30, 33–53, 60–80, 95–115, and 152–172; these read ILVL…VLLT, IYSA…YFLL, VAQL…AVMF, IGDG…MTTI, and FYLP…GAIT.

It belongs to the complex I subunit 6 family. NDH is composed of at least 16 different subunits, 5 of which are encoded in the nucleus.

The protein resides in the plastid. The protein localises to the chloroplast thylakoid membrane. The catalysed reaction is a plastoquinone + NADH + (n+1) H(+)(in) = a plastoquinol + NAD(+) + n H(+)(out). It carries out the reaction a plastoquinone + NADPH + (n+1) H(+)(in) = a plastoquinol + NADP(+) + n H(+)(out). Functionally, NDH shuttles electrons from NAD(P)H:plastoquinone, via FMN and iron-sulfur (Fe-S) centers, to quinones in the photosynthetic chain and possibly in a chloroplast respiratory chain. The immediate electron acceptor for the enzyme in this species is believed to be plastoquinone. Couples the redox reaction to proton translocation, and thus conserves the redox energy in a proton gradient. This is NAD(P)H-quinone oxidoreductase subunit 6, chloroplastic (ndhG) from Brachypodium distachyon (Purple false brome).